Here is a 118-residue protein sequence, read N- to C-terminus: Large ribosomal subunit protein bL20 (118 aa).

Belongs to the bacterial ribosomal protein bL20 family.

Binds directly to 23S ribosomal RNA and is necessary for the in vitro assembly process of the 50S ribosomal subunit. It is not involved in the protein synthesizing functions of that subunit. The protein is Large ribosomal subunit protein bL20 of Staphylococcus epidermidis (strain ATCC 35984 / DSM 28319 / BCRC 17069 / CCUG 31568 / BM 3577 / RP62A).